Consider the following 363-residue polypeptide: NADH-quinone oxidoreductase subunit H (363 aa).

10 consecutive transmembrane segments (helical) span residues 29–49 (VLKILLIAVPVIVTVAFYVVW), 62–82 (GPMYVGMGIFQAFADVFKLLF), 96–116 (FIIAPLLTLAPAFAAWSVVPF), 127–147 (VGLLYLLAMTSLGVYGIILAG), 163–183 (AAQVVSYEIAMGFALVGVMIA), 202–222 (FFDWFLIPLFPLFIVYWVSGV), 239–257 (IVAGHMVEYSGGAFALFFL), 264–286 (ILVSFLISIFFLGGWLSPIQGWV), 299–319 (TGGWPWLLMKVFFFASAYIWF), and 339–359 (FIPLTIVWIAVTALMVFYGVI).

The protein belongs to the complex I subunit 1 family. NDH-1 is composed of 14 different subunits. Subunits NuoA, H, J, K, L, M, N constitute the membrane sector of the complex.

It is found in the cell inner membrane. The catalysed reaction is a quinone + NADH + 5 H(+)(in) = a quinol + NAD(+) + 4 H(+)(out). Functionally, NDH-1 shuttles electrons from NADH, via FMN and iron-sulfur (Fe-S) centers, to quinones in the respiratory chain. The immediate electron acceptor for the enzyme in this species is believed to be ubiquinone. Couples the redox reaction to proton translocation (for every two electrons transferred, four hydrogen ions are translocated across the cytoplasmic membrane), and thus conserves the redox energy in a proton gradient. This subunit may bind ubiquinone. The chain is NADH-quinone oxidoreductase subunit H from Xanthomonas campestris pv. campestris (strain 8004).